The sequence spans 95 residues: Co-chaperonin GroES (95 aa).

The protein belongs to the GroES chaperonin family. As to quaternary structure, heptamer of 7 subunits arranged in a ring. Interacts with the chaperonin GroEL.

It localises to the cytoplasm. Together with the chaperonin GroEL, plays an essential role in assisting protein folding. The GroEL-GroES system forms a nano-cage that allows encapsulation of the non-native substrate proteins and provides a physical environment optimized to promote and accelerate protein folding. GroES binds to the apical surface of the GroEL ring, thereby capping the opening of the GroEL channel. In Desulfotalea psychrophila (strain LSv54 / DSM 12343), this protein is Co-chaperonin GroES.